Consider the following 605-residue polypeptide: MRIDQSIINEIKDKTDILDLVSEYVKLEKRGRNYIGLCPFHDEKTPSFTVSEDKQICHCFGCKKGGNVFQFTQEIKDISFVEAVKELGDRVNVAVDIEATQFNSNVQIASDDLQMIEMHELIQEFYYYALTKTVEGEQALTYLQERGFTDALIKERGIGFAPDSSHFCHDFLQKKGYDIELAYEAGLLSRNEENFSYYDRFRNRIMFPLKNAQGRIVGYSGRTYTGQEPKYLNSPETPIFQKRKLLYNLDKARKSIRKLDEIVLLEGFMDVIKSDTAGLKNVVATMGTQLSDEHITFIRKLTLNITLMFDGDFAGSEATLKTGQHLLQQGLNVFVIQLPSGMDPDEYIGKYGNDAFTAFVKNDKKSFAHYKVSILKDEIAHNDLSYERYLKELSHDISLMKSSILQQKALNDVAPFFNVSPEQLANEIQFNQAPANYYPDDEYGGYDEYGGYIEPEPIGMAQFDNLSRQEKAERAFLKHLMRDKDTFLNYYESVDKDNFTNQHFKYVFEVLHDFYAENDQYNISDAVQYVNSNELRETLISLEQYNLNDEPYENEIDDYVNVINEKGQETIESLNHKLREATRIGDVELQKYYLQQIVAKNKERM.

The CHC2-type zinc finger occupies 38-62; sequence CPFHDEKTPSFTVSEDKQICHCFGC. Residues 260–341 enclose the Toprim domain; it reads DEIVLLEGFM…NVFVIQLPSG (82 aa). 3 residues coordinate Mg(2+): E266, D310, and D312.

The protein belongs to the DnaG primase family. As to quaternary structure, monomer. Interacts with DnaB. Zn(2+) is required as a cofactor. It depends on Mg(2+) as a cofactor.

It carries out the reaction ssDNA + n NTP = ssDNA/pppN(pN)n-1 hybrid + (n-1) diphosphate.. RNA polymerase that catalyzes the synthesis of short RNA molecules used as primers for DNA polymerase during DNA replication. The chain is DNA primase from Staphylococcus aureus (strain MW2).